Here is a 157-residue protein sequence, read N- to C-terminus: Ribosomal RNA large subunit methyltransferase H (157 aa).

S-adenosyl-L-methionine contacts are provided by residues L73, G105, and 124 to 129 (LSKMTF).

The protein belongs to the RNA methyltransferase RlmH family. In terms of assembly, homodimer.

The protein localises to the cytoplasm. It catalyses the reaction pseudouridine(1915) in 23S rRNA + S-adenosyl-L-methionine = N(3)-methylpseudouridine(1915) in 23S rRNA + S-adenosyl-L-homocysteine + H(+). Its function is as follows. Specifically methylates the pseudouridine at position 1915 (m3Psi1915) in 23S rRNA. The polypeptide is Ribosomal RNA large subunit methyltransferase H (Parabacteroides distasonis (strain ATCC 8503 / DSM 20701 / CIP 104284 / JCM 5825 / NCTC 11152)).